Reading from the N-terminus, the 182-residue chain is Ribosome-recycling factor (182 aa).

The protein belongs to the RRF family.

The protein localises to the cytoplasm. In terms of biological role, responsible for the release of ribosomes from messenger RNA at the termination of protein biosynthesis. May increase the efficiency of translation by recycling ribosomes from one round of translation to another. This chain is Ribosome-recycling factor, found in Mycoplasma capricolum subsp. capricolum (strain California kid / ATCC 27343 / NCTC 10154).